The chain runs to 174 residues: ATP synthase subunit delta (174 aa).

It belongs to the ATPase delta chain family. F-type ATPases have 2 components, F(1) - the catalytic core - and F(0) - the membrane proton channel. F(1) has five subunits: alpha(3), beta(3), gamma(1), delta(1), epsilon(1). F(0) has three main subunits: a(1), b(2) and c(10-14). The alpha and beta chains form an alternating ring which encloses part of the gamma chain. F(1) is attached to F(0) by a central stalk formed by the gamma and epsilon chains, while a peripheral stalk is formed by the delta and b chains.

It localises to the cell inner membrane. F(1)F(0) ATP synthase produces ATP from ADP in the presence of a proton or sodium gradient. F-type ATPases consist of two structural domains, F(1) containing the extramembraneous catalytic core and F(0) containing the membrane proton channel, linked together by a central stalk and a peripheral stalk. During catalysis, ATP synthesis in the catalytic domain of F(1) is coupled via a rotary mechanism of the central stalk subunits to proton translocation. Functionally, this protein is part of the stalk that links CF(0) to CF(1). It either transmits conformational changes from CF(0) to CF(1) or is implicated in proton conduction. The chain is ATP synthase subunit delta from Neorickettsia sennetsu (strain ATCC VR-367 / Miyayama) (Ehrlichia sennetsu).